Here is a 482-residue protein sequence, read N- to C-terminus: Falcipain-2b (482 aa).

Residues 1–35 (MDYHMDYIPNEVISHQGERFVDKYVDRKILKNKKS) lie on the Cytoplasmic side of the membrane. Positions 1 to 241 (MDYHMDYIPN…PLKNSKYLLD (241 aa)) are cleaved as a propeptide — activation peptide. Residues 16 to 25 (QGERFVDKYV) carry the Bipartite vacuolar targeting signal 1 motif. Residues 36–56 (LLVIISLSVLSVVGFILFYFT) traverse the membrane as a helical; Signal-anchor for type II membrane protein segment. Over 57-482 (PNFRKSDLFK…GTDAFIPLIE (426 aa)) the chain is Lumenal. A glycan (N-linked (GlcNAc...) asparagine) is linked at asparagine 67. Positions 84 to 105 (KSPNGKKFIVSKIDEALSFYDN) match the Bipartite vacuolar targeting signal 2 motif. Asparagine 117 is a glycosylation site (N-linked (GlcNAc...) asparagine). The Nose motif; required for the correct folding of the mature form signature appears at 242 to 258 (QINYDAVIKKYKGNENF). 4 cysteine pairs are disulfide-bonded: cysteine 280–cysteine 321, cysteine 314–cysteine 355, cysteine 340–cysteine 360, and cysteine 409–cysteine 470. The active site involves cysteine 283. Residue histidine 415 is part of the active site. The short motif at 426-435 (EIVNPLTKKG) is the Arm motif; binds to host hemoglobin and required for the inhibitory interaction between the propeptide and the catalytic domain element.

Belongs to the peptidase C1 family. As to quaternary structure, component of the hemozoin formation complex (HFC) composed of falcipains FP2A and/or FP2B, plasmepsins PMII, PMIII/HAP and PMIV, heme detoxifying protein HDP and falcilysin FLN. The HFC complex is involved in hemoglobin degradation and detoxification of heme in the food vacuole during the asexual blood stage.

Its subcellular location is the vacuole. The protein resides in the membrane. Its function is as follows. Cysteine protease which cleaves native host hemoglobin in the food vacuole during the asexual blood stage. Preferentially cleaves substrates which have a leucine at the P2 position. This chain is Falcipain-2b, found in Plasmodium falciparum (isolate 3D7).